The sequence spans 121 residues: Small ribosomal subunit protein uS13 (121 aa).

Residues 91–121 are disordered; the sequence is HRRGLPVRGQKTKNNARTRKGPVKTVANKKK.

This sequence belongs to the universal ribosomal protein uS13 family. As to quaternary structure, part of the 30S ribosomal subunit. Forms a loose heterodimer with protein S19. Forms two bridges to the 50S subunit in the 70S ribosome.

In terms of biological role, located at the top of the head of the 30S subunit, it contacts several helices of the 16S rRNA. In the 70S ribosome it contacts the 23S rRNA (bridge B1a) and protein L5 of the 50S subunit (bridge B1b), connecting the 2 subunits; these bridges are implicated in subunit movement. Contacts the tRNAs in the A and P-sites. The sequence is that of Small ribosomal subunit protein uS13 from Staphylococcus haemolyticus (strain JCSC1435).